A 370-amino-acid polypeptide reads, in one-letter code: 3-dehydroquinate synthase (370 aa).

Residues 107-111, 131-132, lysine 144, and lysine 153 contribute to the NAD(+) site; these read GVIGD and TS. Zn(2+) contacts are provided by glutamate 186, histidine 249, and histidine 267.

Belongs to the sugar phosphate cyclases superfamily. Dehydroquinate synthase family. Co(2+) is required as a cofactor. Requires Zn(2+) as cofactor. It depends on NAD(+) as a cofactor.

Its subcellular location is the cytoplasm. The catalysed reaction is 7-phospho-2-dehydro-3-deoxy-D-arabino-heptonate = 3-dehydroquinate + phosphate. It participates in metabolic intermediate biosynthesis; chorismate biosynthesis; chorismate from D-erythrose 4-phosphate and phosphoenolpyruvate: step 2/7. Functionally, catalyzes the conversion of 3-deoxy-D-arabino-heptulosonate 7-phosphate (DAHP) to dehydroquinate (DHQ). This chain is 3-dehydroquinate synthase, found in Jannaschia sp. (strain CCS1).